The following is a 157-amino-acid chain: Nuclear cap-binding protein subunit 2 (157 aa).

MRNA contacts are provided by residues Y17, Y40, R109–D113, R120–R124, and Q130–V131. The 79-residue stretch at C37–G115 folds into the RRM domain.

Belongs to the RRM NCBP2 family. Component of the nuclear cap-binding complex (CBC), a heterodimer composed of ncbp-1 and ncbp-2 that interacts with m7GpppG-capped RNA.

The protein resides in the nucleus. Component of the cap-binding complex (CBC), which binds co-transcriptionally to the 5' cap of pre-mRNAs and is involved in various processes such as pre-mRNA splicing and RNA-mediated gene silencing (RNAi). The CBC complex is involved in miRNA-mediated RNA interference and is required for primary microRNAs (miRNAs) processing. In the CBC complex, ncbp-2 recognizes and binds capped RNAs (m7GpppG-capped RNA) but requires ncbp-1 to stabilize the movement of its N-terminal loop and lock the CBC into a high affinity cap-binding state with the cap structure. The chain is Nuclear cap-binding protein subunit 2 (ncbp-2) from Caenorhabditis briggsae.